Consider the following 147-residue polypeptide: DNA-directed RNA polymerase I subunit rpa14 (147 aa).

Positions 71-147 are disordered; the sequence is VQGPPTEELI…TQGVGEKEQS (77 aa). A compositionally biased stretch (low complexity) spans 74–84; that stretch reads PPTEELIIPPE. A compositionally biased stretch (basic and acidic residues) spans 87–111; that stretch reads LETKEEESLKHAREENDDLHLDKET. The segment covering 112–124 has biased composition (basic residues); sequence KKRLKKEKKKAAR. The span at 125 to 135 shows a compositional bias: basic and acidic residues; the sequence is REKEEARKAKA.

In terms of assembly, component of the RNA polymerase I (Pol I) complex consisting of 14 subunits. Part of a Pol I subcomplex consisting of the subunits A14 and A43. Interacts with rpa43. In terms of processing, phosphorylated.

It is found in the nucleus. Its subcellular location is the nucleolus. Its function is as follows. DNA-dependent RNA polymerase catalyzes the transcription of DNA into RNA using the four ribonucleoside triphosphates as substrates. Component of RNA polymerase I which synthesizes ribosomal RNA precursors. A14 seems to play a role in the stability of Pol I subunit A43 and association of rrn3 to Pol I. This is DNA-directed RNA polymerase I subunit rpa14 (ker1) from Schizosaccharomyces pombe (strain 972 / ATCC 24843) (Fission yeast).